Reading from the N-terminus, the 250-residue chain is Small ribosomal subunit protein uS3 (250 aa).

In terms of domain architecture, KH type-2 spans 39 to 107 (VREFLTKKLK…PAQVSINEID (69 aa)). The interval 214–250 (VMNPAPQEERPAKRGRGRGEGQERRGRRSDRAADKGE) is disordered. Residues 220–250 (QEERPAKRGRGRGEGQERRGRRSDRAADKGE) are compositionally biased toward basic and acidic residues.

This sequence belongs to the universal ribosomal protein uS3 family. In terms of assembly, part of the 30S ribosomal subunit. Forms a tight complex with proteins S10 and S14.

Functionally, binds the lower part of the 30S subunit head. Binds mRNA in the 70S ribosome, positioning it for translation. This is Small ribosomal subunit protein uS3 from Acinetobacter baylyi (strain ATCC 33305 / BD413 / ADP1).